Reading from the N-terminus, the 457-residue chain is Argininosuccinate lyase (457 aa).

The protein belongs to the lyase 1 family. Argininosuccinate lyase subfamily.

The protein resides in the cytoplasm. It catalyses the reaction 2-(N(omega)-L-arginino)succinate = fumarate + L-arginine. It functions in the pathway amino-acid biosynthesis; L-arginine biosynthesis; L-arginine from L-ornithine and carbamoyl phosphate: step 3/3. This chain is Argininosuccinate lyase, found in Salmonella arizonae (strain ATCC BAA-731 / CDC346-86 / RSK2980).